The following is a 690-amino-acid chain: Beta-galactosidase (690 aa).

Residue N173 participates in substrate binding. Residue E174 is the Proton donor of the active site. Position 345 (W345) interacts with substrate.

This sequence belongs to the glycosyl hydrolase 42 family.

The enzyme catalyses Hydrolysis of terminal non-reducing beta-D-galactose residues in beta-D-galactosides.. With respect to regulation, activity stimulated by beta-mercaptoethanol. Functionally, highly specific towards beta-D-galactoside substrates. Hydrolyzes 5-bromo-4-chloro-3-indolyl-beta-D-galactopyranoside (X-Gal) and o-nitrophenyl-beta-D-galactopyranoside (ONPG). Has activity against p-nitrophenyl(pNP)-beta-D-galactoside, but not significantly at all towards pNP-alpha-D-galactoside, pNP-beta-D-glucoside, pNP-beta-D-mannoside, pNP-beta-L-fucoside, pNP-beta-D-xyloside, pNP-beta-L-arabinoside, pNP-beta-D-galuronide, pNP-beta-D-glucuronide, pNP-beta-D-lactoside or pNP-beta-D-cellobioside. In Arthrobacter sp, this protein is Beta-galactosidase.